The following is a 1110-amino-acid chain: Retinal guanylyl cyclase 1 (1110 aa).

The signal sequence occupies residues 1-56 (MTACTFLAGGLRDPGLCGPTRWAPSPPGLPPIPPRPRLRLRPPLLLLLLLPRSVLS). The Extracellular segment spans residues 57 to 467 (AVFTVGVLGP…PDTICNGGVE (411 aa)). A glycan (N-linked (GlcNAc...) asparagine) is linked at N302. Residues 468–492 (PSVVFIGFLLVVGMGLAGAFLAHYC) traverse the membrane as a helical segment. Positions 493–813 (RHRLLHIQMV…DRTFELFKSI (321 aa)) constitute a Protein kinase domain. The Cytoplasmic portion of the chain corresponds to 493 to 1110 (RHRLLHIQMV…KARPGQFSGK (618 aa)). The Guanylate cyclase domain occupies 885–1015 (TLYFSDIVGF…DTVNTASAME (131 aa)). The segment at 1070–1110 (PIPKPPDLQPGASNHGISLHEIPPDRRQKLEKARPGQFSGK) is disordered. The span at 1091-1103 (IPPDRRQKLEKAR) shows a compositional bias: basic and acidic residues.

The protein belongs to the adenylyl cyclase class-4/guanylyl cyclase family. As to quaternary structure, homodimer; requires homodimerization for guanylyl cyclase activity. Interacts (via C-terminus) with RD3 (via C-terminus); promotes the exit of GUCY2D from the endoplasmic reticulum and its trafficking to the photoreceptor outer segments. Interaction with RD3 negatively regulates GUCY2D guanylate cyclase activity. In terms of tissue distribution, expressed in the retina in rod outer segment.

Its subcellular location is the photoreceptor outer segment membrane. It localises to the endoplasmic reticulum membrane. It catalyses the reaction GTP = 3',5'-cyclic GMP + diphosphate. Its activity is regulated as follows. Activated by GUCA1A when free calcium ions concentration is low, and inhibited by GUCA1A when free calcium ions concentration is high. Negatively regulated by RD3; inhibits the basal and GUCA1A-stimulated guanylate cyclase activity. Its function is as follows. Catalyzes the synthesis of cyclic GMP (cGMP) in rods and cones of photoreceptors. Plays an essential role in phototransduction, by mediating cGMP replenishment. May also participate in the trafficking of membrane-asociated proteins to the photoreceptor outer segment membrane. The protein is Retinal guanylyl cyclase 1 (GUCY2D) of Bos taurus (Bovine).